The chain runs to 65 residues: Large ribosomal subunit protein bL35 (65 aa).

This sequence belongs to the bacterial ribosomal protein bL35 family.

This chain is Large ribosomal subunit protein bL35, found in Psychrobacter arcticus (strain DSM 17307 / VKM B-2377 / 273-4).